The sequence spans 282 residues: tRNA pseudouridine synthase B (282 aa).

Residue D39 is the Nucleophile of the active site.

The protein belongs to the pseudouridine synthase TruB family. Type 1 subfamily.

It catalyses the reaction uridine(55) in tRNA = pseudouridine(55) in tRNA. In terms of biological role, responsible for synthesis of pseudouridine from uracil-55 in the psi GC loop of transfer RNAs. This chain is tRNA pseudouridine synthase B, found in Borreliella burgdorferi (strain ATCC 35210 / DSM 4680 / CIP 102532 / B31) (Borrelia burgdorferi).